Reading from the N-terminus, the 207-residue chain is Urease accessory protein UreG (207 aa).

12–19 (GPVGAGKT) is a GTP binding site.

The protein belongs to the SIMIBI class G3E GTPase family. UreG subfamily. As to quaternary structure, homodimer. UreD, UreF and UreG form a complex that acts as a GTP-hydrolysis-dependent molecular chaperone, activating the urease apoprotein by helping to assemble the nickel containing metallocenter of UreC. The UreE protein probably delivers the nickel.

Its subcellular location is the cytoplasm. Its function is as follows. Facilitates the functional incorporation of the urease nickel metallocenter. This process requires GTP hydrolysis, probably effectuated by UreG. In Cereibacter sphaeroides (strain ATCC 17029 / ATH 2.4.9) (Rhodobacter sphaeroides), this protein is Urease accessory protein UreG.